The chain runs to 426 residues: Riboflavin biosynthesis protein PYRD, chloroplastic (426 aa).

The transit peptide at 1–61 (MQISCLPISI…SQTGFSNPVL (61 aa)) directs the protein to the chloroplast. The CMP/dCMP-type deaminase domain occupies 72–194 (VDDSFYMRKC…RLKDAGIDVT (123 aa)). Histidine 121 contributes to the Zn(2+) binding site. Glutamate 123 acts as the Proton donor in catalysis. The Zn(2+) site is built by cysteine 146 and cysteine 155.

It depends on Zn(2+) as a cofactor.

Its subcellular location is the plastid. It is found in the chloroplast. It catalyses the reaction 2,5-diamino-6-hydroxy-4-(5-phosphoribosylamino)-pyrimidine + H2O + H(+) = 5-amino-6-(5-phospho-D-ribosylamino)uracil + NH4(+). It participates in cofactor biosynthesis; riboflavin biosynthesis; 5-amino-6-(D-ribitylamino)uracil from GTP: step 2/4. In terms of biological role, monofunctional pyrimidine deaminase involved in the riboflavin biosynthesis pathway. Also has a reductase domain that lacks catalytically essential substrate-binding residues. The polypeptide is Riboflavin biosynthesis protein PYRD, chloroplastic (PYRD) (Arabidopsis thaliana (Mouse-ear cress)).